Consider the following 356-residue polypeptide: MSEVDVPELLFERVWLQVDRDRDGFIYAKQMPSFITQCEQVIKDTVNTNKTDFHMTRFKNRLKLPLLPKLHMDLIDAFAKETPYYKIYKESFSDMLNKLTGNNFSTVINKIFEDCDGFPASFISALEVKADVKSSPRSKADSLGSPIKVDLLRNLKPQEEPETPRRINRKYKSLELQLESMKRELEDKEKTIMNNERNLTELRSTISKLKEKYDLLSEEYEQRHIHGGNNGTAIKHDVVIGELKSRLQEQNRLIRILQEQIQFDPQLKRETRVHDNKSKNNTFNGAIAYVIPFLLFIFVIRSLITKEDIGDATMALPWWERNNLASRLAWYFRDVFSNDSAKFLESDAYDKVFGIH.

Positions 165-264 (RRINRKYKSL…RILQEQIQFD (100 aa)) form a coiled coil. The helical transmembrane segment at 285–305 (GAIAYVIPFLLFIFVIRSLIT) threads the bilayer.

Belongs to the MPS2 family.

The protein localises to the nucleus membrane. The protein resides in the cytoplasm. It localises to the cytoskeleton. Its subcellular location is the microtubule organizing center. It is found in the spindle pole body. Functionally, component of the spindle pole body (SPB) required for insertion of the nascent SPB into the nuclear envelope and for the proper execution of spindle pole body (SPB) duplication. This is Monopolar spindle protein 2 (MPS2) from Candida glabrata (strain ATCC 2001 / BCRC 20586 / JCM 3761 / NBRC 0622 / NRRL Y-65 / CBS 138) (Yeast).